We begin with the raw amino-acid sequence, 164 residues long: UPF0304 protein YfbU (164 aa).

The protein belongs to the UPF0304 family.

The chain is UPF0304 protein YfbU (yfbU) from Escherichia coli O6:H1 (strain CFT073 / ATCC 700928 / UPEC).